Reading from the N-terminus, the 336-residue chain is D-alanine--D-alanine ligase (336 aa).

Residues 124 to 330 (KMWFSALGIP…FTQYLSLVIN (207 aa)) enclose the ATP-grasp domain. Residue 154–209 (ALEKWGSIFVKAASQGSSVGCYKVDEASKVLGVLKDAFGYAPYVIVEKTIKARELE) coordinates ATP. Mg(2+) contacts are provided by Asp-284, Glu-297, and Asn-299.

This sequence belongs to the D-alanine--D-alanine ligase family. Mg(2+) serves as cofactor. Requires Mn(2+) as cofactor.

The protein localises to the cytoplasm. It carries out the reaction 2 D-alanine + ATP = D-alanyl-D-alanine + ADP + phosphate + H(+). Its pathway is cell wall biogenesis; peptidoglycan biosynthesis. Functionally, cell wall formation. This is D-alanine--D-alanine ligase from Shewanella oneidensis (strain ATCC 700550 / JCM 31522 / CIP 106686 / LMG 19005 / NCIMB 14063 / MR-1).